The primary structure comprises 276 residues: MKKITPKAMCAWIPKREDETHKGDYGRVLIVAGNKQFGGAAIMAAEACVKSGAGLTTVASDSVNRPALQTRIPECMFIDYENITSLSEQISQFDTILIGPGLGLDAYAEEIFRLVLQKSTEHQQVIIDGDGITIYAKGENPHPAAKLTFTPHAGEWERLKVLAPDAVTPTDVALAIDATIVLKGHRTKVYSGESAWQNMYGTPAMATGGMGDTLAGTICGLMAQTEKPITGTLAAVFLHSYIGEILAKKRYVVLPTEIAEELPTYLKIFSETDEHA.

The region spanning 5-269 (TPKAMCAWIP…EELPTYLKIF (265 aa)) is the YjeF C-terminal domain. Residues Ala-40, Gly-103, and His-152 each contribute to the (6S)-NADPHX site. AMP is bound at residue Gly-211. Asp-212 contributes to the (6S)-NADPHX binding site.

This sequence belongs to the NnrD/CARKD family. As to quaternary structure, homotetramer. Mg(2+) is required as a cofactor.

It carries out the reaction (6S)-NADHX + ADP = AMP + phosphate + NADH + H(+). The catalysed reaction is (6S)-NADPHX + ADP = AMP + phosphate + NADPH + H(+). Functionally, catalyzes the dehydration of the S-form of NAD(P)HX at the expense of ADP, which is converted to AMP. Together with NAD(P)HX epimerase, which catalyzes the epimerization of the S- and R-forms, the enzyme allows the repair of both epimers of NAD(P)HX, a damaged form of NAD(P)H that is a result of enzymatic or heat-dependent hydration. This chain is ADP-dependent (S)-NAD(P)H-hydrate dehydratase, found in Listeria monocytogenes serovar 1/2a (strain ATCC BAA-679 / EGD-e).